A 230-amino-acid chain; its full sequence is Cytidylate kinase (230 aa).

G12–T20 contributes to the ATP binding site.

The protein belongs to the cytidylate kinase family. Type 1 subfamily.

It is found in the cytoplasm. It carries out the reaction CMP + ATP = CDP + ADP. It catalyses the reaction dCMP + ATP = dCDP + ADP. The polypeptide is Cytidylate kinase (Corynebacterium diphtheriae (strain ATCC 700971 / NCTC 13129 / Biotype gravis)).